We begin with the raw amino-acid sequence, 217 residues long: 3,4-dihydroxy-2-butanone 4-phosphate synthase (217 aa).

D-ribulose 5-phosphate is bound by residues 37 to 38, Asp-42, 150 to 154, and Glu-174; these read RE and RRGHT. A Mg(2+)-binding site is contributed by Glu-38. His-153 is a binding site for Mg(2+).

This sequence belongs to the DHBP synthase family. In terms of assembly, homodimer. The cofactor is Mg(2+). Mn(2+) is required as a cofactor.

The catalysed reaction is D-ribulose 5-phosphate = (2S)-2-hydroxy-3-oxobutyl phosphate + formate + H(+). The protein operates within cofactor biosynthesis; riboflavin biosynthesis; 2-hydroxy-3-oxobutyl phosphate from D-ribulose 5-phosphate: step 1/1. Functionally, catalyzes the conversion of D-ribulose 5-phosphate to formate and 3,4-dihydroxy-2-butanone 4-phosphate. This Shewanella woodyi (strain ATCC 51908 / MS32) protein is 3,4-dihydroxy-2-butanone 4-phosphate synthase.